Here is a 416-residue protein sequence, read N- to C-terminus: L-threonine dehydratase biosynthetic IlvA (416 aa).

Position 51 is an N6-(pyridoxal phosphate)lysine (lysine 51). Pyridoxal 5'-phosphate is bound by residues asparagine 78, 184 to 188 (GGGGL), and serine 309. An ACT-like domain is found at 333 to 407 (HYFVINFPQR…FDNRYVNLHG (75 aa)).

The protein belongs to the serine/threonine dehydratase family. Homotetramer. It depends on pyridoxal 5'-phosphate as a cofactor.

It catalyses the reaction L-threonine = 2-oxobutanoate + NH4(+). The protein operates within amino-acid biosynthesis; L-isoleucine biosynthesis; 2-oxobutanoate from L-threonine: step 1/1. Functionally, catalyzes the anaerobic formation of alpha-ketobutyrate and ammonia from threonine in a two-step reaction. The first step involved a dehydration of threonine and a production of enamine intermediates (aminocrotonate), which tautomerizes to its imine form (iminobutyrate). Both intermediates are unstable and short-lived. The second step is the nonenzymatic hydrolysis of the enamine/imine intermediates to form 2-ketobutyrate and free ammonia. In the low water environment of the cell, the second step is accelerated by RidA. The polypeptide is L-threonine dehydratase biosynthetic IlvA (ilvA) (Lactococcus lactis subsp. lactis (strain IL1403) (Streptococcus lactis)).